Reading from the N-terminus, the 146-residue chain is Deoxyuridine 5'-triphosphate nucleotidohydrolase (146 aa).

Substrate contacts are provided by residues 60–62 (RSG), Asn73, and 77–79 (VID).

Belongs to the dUTPase family. Mg(2+) serves as cofactor.

The enzyme catalyses dUTP + H2O = dUMP + diphosphate + H(+). It participates in pyrimidine metabolism; dUMP biosynthesis; dUMP from dCTP (dUTP route): step 2/2. Functionally, this enzyme is involved in nucleotide metabolism: it produces dUMP, the immediate precursor of thymidine nucleotides and it decreases the intracellular concentration of dUTP so that uracil cannot be incorporated into DNA. This Tropheryma whipplei (strain TW08/27) (Whipple's bacillus) protein is Deoxyuridine 5'-triphosphate nucleotidohydrolase.